The primary structure comprises 253 residues: Large ribosomal subunit protein uL4 (253 aa).

Residues 78–107 form a disordered region; the sequence is SRAARVPHAKGGRRAHPPKPEADRSEKVNT. Over residues 82 to 94 the composition is skewed to basic residues; sequence RVPHAKGGRRAHP. Positions 95–107 are enriched in basic and acidic residues; the sequence is PKPEADRSEKVNT.

This sequence belongs to the universal ribosomal protein uL4 family. As to quaternary structure, part of the 50S ribosomal subunit.

One of the primary rRNA binding proteins, this protein initially binds near the 5'-end of the 23S rRNA. It is important during the early stages of 50S assembly. It makes multiple contacts with different domains of the 23S rRNA in the assembled 50S subunit and ribosome. Its function is as follows. Forms part of the polypeptide exit tunnel. This Methanosarcina acetivorans (strain ATCC 35395 / DSM 2834 / JCM 12185 / C2A) protein is Large ribosomal subunit protein uL4.